Reading from the N-terminus, the 190-residue chain is Adenine phosphoribosyltransferase (190 aa).

This sequence belongs to the purine/pyrimidine phosphoribosyltransferase family. Homodimer.

The protein resides in the cytoplasm. It carries out the reaction AMP + diphosphate = 5-phospho-alpha-D-ribose 1-diphosphate + adenine. It participates in purine metabolism; AMP biosynthesis via salvage pathway; AMP from adenine: step 1/1. Functionally, catalyzes a salvage reaction resulting in the formation of AMP, that is energically less costly than de novo synthesis. This Cupriavidus metallidurans (strain ATCC 43123 / DSM 2839 / NBRC 102507 / CH34) (Ralstonia metallidurans) protein is Adenine phosphoribosyltransferase.